The chain runs to 404 residues: Bifunctional enzyme IspD/IspF (404 aa).

The segment at 1–243 (MQAEEQFSCG…KLTRMAIPDV (243 aa)) is 2-C-methyl-D-erythritol 4-phosphate cytidylyltransferase. Positions 244-404 (RTGNGYDVHQ…TVVYASGGDA (161 aa)) are 2-C-methyl-D-erythritol 2,4-cyclodiphosphate synthase. Residues Asp250 and His252 each coordinate a divalent metal cation. Residues 250-252 (DVH) and 276-277 (HS) each bind 4-CDP-2-C-methyl-D-erythritol 2-phosphate. His284 is a binding site for a divalent metal cation. 4-CDP-2-C-methyl-D-erythritol 2-phosphate contacts are provided by residues 298–300 (DIG), 374–377 (TTNE), Phe381, and Arg384.

In the N-terminal section; belongs to the IspD/TarI cytidylyltransferase family. IspD subfamily. The protein in the C-terminal section; belongs to the IspF family. It depends on a divalent metal cation as a cofactor.

It catalyses the reaction 2-C-methyl-D-erythritol 4-phosphate + CTP + H(+) = 4-CDP-2-C-methyl-D-erythritol + diphosphate. The enzyme catalyses 4-CDP-2-C-methyl-D-erythritol 2-phosphate = 2-C-methyl-D-erythritol 2,4-cyclic diphosphate + CMP. It functions in the pathway isoprenoid biosynthesis; isopentenyl diphosphate biosynthesis via DXP pathway; isopentenyl diphosphate from 1-deoxy-D-xylulose 5-phosphate: step 2/6. It participates in isoprenoid biosynthesis; isopentenyl diphosphate biosynthesis via DXP pathway; isopentenyl diphosphate from 1-deoxy-D-xylulose 5-phosphate: step 4/6. Its function is as follows. Bifunctional enzyme that catalyzes the formation of 4-diphosphocytidyl-2-C-methyl-D-erythritol from CTP and 2-C-methyl-D-erythritol 4-phosphate (MEP) (IspD), and catalyzes the conversion of 4-diphosphocytidyl-2-C-methyl-D-erythritol 2-phosphate (CDP-ME2P) to 2-C-methyl-D-erythritol 2,4-cyclodiphosphate (ME-CPP) with a corresponding release of cytidine 5-monophosphate (CMP) (IspF). The polypeptide is Bifunctional enzyme IspD/IspF (Sinorhizobium medicae (strain WSM419) (Ensifer medicae)).